The chain runs to 138 residues: Nucleoside diphosphate kinase (138 aa).

Residues K10, F58, R86, T92, R103, and N113 each contribute to the ATP site. H116 acts as the Pros-phosphohistidine intermediate in catalysis.

The protein belongs to the NDK family. As to quaternary structure, homotetramer. Mg(2+) serves as cofactor.

The protein resides in the cytoplasm. It carries out the reaction a 2'-deoxyribonucleoside 5'-diphosphate + ATP = a 2'-deoxyribonucleoside 5'-triphosphate + ADP. The catalysed reaction is a ribonucleoside 5'-diphosphate + ATP = a ribonucleoside 5'-triphosphate + ADP. In terms of biological role, major role in the synthesis of nucleoside triphosphates other than ATP. The ATP gamma phosphate is transferred to the NDP beta phosphate via a ping-pong mechanism, using a phosphorylated active-site intermediate. This Haemophilus ducreyi (strain 35000HP / ATCC 700724) protein is Nucleoside diphosphate kinase.